Consider the following 551-residue polypeptide: FGGY carbohydrate kinase domain-containing protein (551 aa).

This sequence belongs to the FGGY kinase family. In terms of tissue distribution, expressed in kidney, lung and small intestine and to a lower extent in liver and detected in cerebrospinal fluid (at protein level).

The enzyme catalyses D-ribulose + ATP = D-ribulose 5-phosphate + ADP + H(+). Its pathway is carbohydrate metabolism; pentose and glucuronate interconversion. Catalyzes ATP-dependent phosphorylation of D-ribulose at C-5 to form D-ribulose 5-phosphate. Postulated to function in a metabolite repair mechanism by preventing toxic accumulation of free D-ribulose formed by non-specific phosphatase activities. Alternatively, may play a role in regulating D-ribulose 5-phosphate recycling in the pentose phosphate pathway. Can phosphorylate ribitol with low efficiency. This is FGGY carbohydrate kinase domain-containing protein from Homo sapiens (Human).